The primary structure comprises 715 residues: Phosphoribosylformylglycinamidine synthase subunit PurL (715 aa).

His-33 is an active-site residue. Tyr-36 is a binding site for ATP. Glu-77 contacts Mg(2+). Residues 78–81 (SHNH) and Arg-100 contribute to the substrate site. The Proton acceptor role is filled by His-79. A Mg(2+)-binding site is contributed by Asp-101. Residue Gln-225 participates in substrate binding. Asp-253 provides a ligand contact to Mg(2+). 297 to 299 (ESQ) contacts substrate. The ATP site is built by Asn-476 and Gly-513. A Mg(2+)-binding site is contributed by Asn-514. Ser-516 serves as a coordination point for substrate.

The protein belongs to the FGAMS family. Monomer. Part of the FGAM synthase complex composed of 1 PurL, 1 PurQ and 2 PurS subunits.

The protein resides in the cytoplasm. The catalysed reaction is N(2)-formyl-N(1)-(5-phospho-beta-D-ribosyl)glycinamide + L-glutamine + ATP + H2O = 2-formamido-N(1)-(5-O-phospho-beta-D-ribosyl)acetamidine + L-glutamate + ADP + phosphate + H(+). The protein operates within purine metabolism; IMP biosynthesis via de novo pathway; 5-amino-1-(5-phospho-D-ribosyl)imidazole from N(2)-formyl-N(1)-(5-phospho-D-ribosyl)glycinamide: step 1/2. Functionally, part of the phosphoribosylformylglycinamidine synthase complex involved in the purines biosynthetic pathway. Catalyzes the ATP-dependent conversion of formylglycinamide ribonucleotide (FGAR) and glutamine to yield formylglycinamidine ribonucleotide (FGAM) and glutamate. The FGAM synthase complex is composed of three subunits. PurQ produces an ammonia molecule by converting glutamine to glutamate. PurL transfers the ammonia molecule to FGAR to form FGAM in an ATP-dependent manner. PurS interacts with PurQ and PurL and is thought to assist in the transfer of the ammonia molecule from PurQ to PurL. In Methanosarcina barkeri (strain Fusaro / DSM 804), this protein is Phosphoribosylformylglycinamidine synthase subunit PurL.